The primary structure comprises 262 residues: Homeobox protein vent1 (262 aa).

2 stretches are compositionally biased toward basic and acidic residues: residues 16–26 and 44–55; these read REEAPDGKDSV and YAKEIPRRKDGQ. The tract at residues 16 to 129 is disordered; sequence REEAPDGKDS…KSPKSDLQRR (114 aa). Over residues 58–79 the composition is skewed to polar residues; the sequence is GEITSFQCSSEEARNRQFSNPS. Over residues 114–128 the composition is skewed to basic and acidic residues; sequence DTEHRSKSPKSDLQR. The homeobox DNA-binding region spans 127 to 186; it reads QRRLRTAFTPQQITRLEQAFNKQRYLGASERKKLATSLQLSEIQVKTWFQNRRMKLKRQI.

The protein resides in the nucleus. Transcriptional repressor. Cooperates with vent2 in a ventral signaling pathway downstream of bmp4, which antagonizes the Spemann organizer and dorsal mesoderm formation, and leads to ventral mesoderm formation. Acts downstream of bmp4 to repress transcription of foxa4-B/XFD-1'. Binds to DNA with preference for the target sequence 5'-CTATT[T/C]G-3'. Also binds 5'-TGCATTTTG-3' at a lower frequency, and occasionally 5'-TTGATC-3'. Binds to the homeobox 2 (HBX2) repressor element in the promoter of the myf5 gene. Cooperates with vent2 to repress myf5 expression in the ventral domain. This chain is Homeobox protein vent1, found in Xenopus tropicalis (Western clawed frog).